Reading from the N-terminus, the 114-residue chain is Late cornified envelope protein 1D (114 aa).

The span at 1–10 (MSCQQSQQQC) shows a compositional bias: low complexity. Disordered regions lie at residues 1–21 (MSCQ…PKCT) and 75–114 (HHRR…GGCC). Basic residues predominate over residues 75–86 (HHRRHRSHRRRP). Residues 88–99 (SSDCCSQPSGGS) are compositionally biased toward low complexity.

It belongs to the LCE family. In terms of assembly, interacts with CYSRT1. In terms of tissue distribution, skin-specific. Expression was readily detected in adult trunk skin, adult arm skin, fetal skin, penal skin, vulva, esophagus and tongue. Not expressed in the cervix, rectum, lung, colon, or placenta.

Precursors of the cornified envelope of the stratum corneum. This is Late cornified envelope protein 1D (LCE1D) from Homo sapiens (Human).